Reading from the N-terminus, the 235-residue chain is Probable inactive serine protease 37 (235 aa).

A signal peptide spans 1 to 19 (MKFTFCLTVLAGTFFSAHS). Positions 20 to 233 (SVQKDDPSPY…YVSWIESTTK (214 aa)) constitute a Peptidase S1 domain. 3 cysteine pairs are disulfide-bonded: C40–C56, C131–C198, and C163–C177.

It belongs to the peptidase S1 family.

Its subcellular location is the cytoplasmic vesicle. It is found in the secretory vesicle. The protein resides in the acrosome. The protein localises to the secreted. Plays a role in male fertility. May have a role in sperm migration or binding to zona-intact eggs. Involved in the activation of the proacrosin/acrosin system. The polypeptide is Probable inactive serine protease 37 (Bos taurus (Bovine)).